A 707-amino-acid chain; its full sequence is Polyribonucleotide nucleotidyltransferase (707 aa).

Residues D487 and D493 each coordinate Mg(2+). The KH domain maps to 554-613 (PSMATIKIDPDKIRDVIGKGGATIRKICDDTGASIDLDDDGTVRIYAEDKTAAKAAIDTV). The S1 motif domain maps to 623–691 (GKLYRGTVAR…NRNRVKLSIK (69 aa)).

The protein belongs to the polyribonucleotide nucleotidyltransferase family. Component of the RNA degradosome, which is a multiprotein complex involved in RNA processing and mRNA degradation. It depends on Mg(2+) as a cofactor.

It is found in the cytoplasm. It carries out the reaction RNA(n+1) + phosphate = RNA(n) + a ribonucleoside 5'-diphosphate. Its function is as follows. Involved in mRNA degradation. Catalyzes the phosphorolysis of single-stranded polyribonucleotides processively in the 3'- to 5'-direction. This is Polyribonucleotide nucleotidyltransferase from Chromohalobacter salexigens (strain ATCC BAA-138 / DSM 3043 / CIP 106854 / NCIMB 13768 / 1H11).